A 195-amino-acid chain; its full sequence is Elongation factor Ts (195 aa).

Positions threonine 81–valine 84 are involved in Mg(2+) ion dislocation from EF-Tu.

It belongs to the EF-Ts family.

The protein resides in the cytoplasm. Associates with the EF-Tu.GDP complex and induces the exchange of GDP to GTP. It remains bound to the aminoacyl-tRNA.EF-Tu.GTP complex up to the GTP hydrolysis stage on the ribosome. The sequence is that of Elongation factor Ts from Rubrobacter xylanophilus (strain DSM 9941 / JCM 11954 / NBRC 16129 / PRD-1).